The chain runs to 128 residues: UPF0325 protein YaeH (128 aa).

The protein belongs to the UPF0325 family.

In Shigella boydii serotype 18 (strain CDC 3083-94 / BS512), this protein is UPF0325 protein YaeH.